Here is a 156-residue protein sequence, read N- to C-terminus: Small ribosomal subunit protein uS7c (156 aa).

It belongs to the universal ribosomal protein uS7 family. Part of the 30S ribosomal subunit.

It localises to the plastid. Its subcellular location is the chloroplast. Functionally, one of the primary rRNA binding proteins, it binds directly to 16S rRNA where it nucleates assembly of the head domain of the 30S subunit. The sequence is that of Small ribosomal subunit protein uS7c (rps7) from Gracilaria tenuistipitata var. liui (Red alga).